Here is a 375-residue protein sequence, read N- to C-terminus: MAIERYIGIMSGTSMDGVDTVLVEIEENSIRLMGENSFPMGEDLKQALLDICLGQSTNLQAVGELDHRLGHLFADAVIALLENTGISPDSITAIGSHGQTVFHSPETQYAFTMQLGDANIIAAKTHITTIADFRRKDMALGGQGAPLVPAFHQQLFSSLDTTRVILNIGGIANITVLTPNQPVTGYDTGPGNMLMDAWIHQHNGSQYDVNAKWAKTGTVNEILLERLLDEPYFKQPAPKSTGRELFNLPWLKQKLSGLDIPAEDVQATLAEFTAVTITNDVITYQHNERSELSTKQELLVCGGGAHNPLLMARLAAQLPKWQVMTTTERGVDSDNMEAMAFAWLAYRTHHNMPGNLPEVTGASGLTSLGAIYPAS.

ATP is bound at residue G12–D19.

It belongs to the anhydro-N-acetylmuramic acid kinase family.

It catalyses the reaction 1,6-anhydro-N-acetyl-beta-muramate + ATP + H2O = N-acetyl-D-muramate 6-phosphate + ADP + H(+). It functions in the pathway amino-sugar metabolism; 1,6-anhydro-N-acetylmuramate degradation. It participates in cell wall biogenesis; peptidoglycan recycling. Functionally, catalyzes the specific phosphorylation of 1,6-anhydro-N-acetylmuramic acid (anhMurNAc) with the simultaneous cleavage of the 1,6-anhydro ring, generating MurNAc-6-P. Is required for the utilization of anhMurNAc either imported from the medium or derived from its own cell wall murein, and thus plays a role in cell wall recycling. The polypeptide is Anhydro-N-acetylmuramic acid kinase (Photobacterium profundum (strain SS9)).